A 209-amino-acid polypeptide reads, in one-letter code: Small ribosomal subunit protein uS4 (209 aa).

Over residues 1–13 (MSTKSRTRSKTRL) the composition is skewed to basic residues. Disordered regions lie at residues 1-20 (MSTKSRTRSKTRLSRALGIP) and 28-49 (YLEKRPYAPGEHGRSKRKQDSD). Residues 95 to 176 (QRLDALVVRS…PKLPSYLEVE (82 aa)) form the S4 RNA-binding domain.

Belongs to the universal ribosomal protein uS4 family. As to quaternary structure, part of the 30S ribosomal subunit. Contacts protein S5. The interaction surface between S4 and S5 is involved in control of translational fidelity.

Functionally, one of the primary rRNA binding proteins, it binds directly to 16S rRNA where it nucleates assembly of the body of the 30S subunit. With S5 and S12 plays an important role in translational accuracy. This is Small ribosomal subunit protein uS4 from Clavibacter michiganensis subsp. michiganensis (strain NCPPB 382).